The chain runs to 473 residues: PEP-dependent dihydroxyacetone kinase, phosphoryl donor subunit DhaM (473 aa).

The 137-residue stretch at 1 to 137 folds into the PTS EIIA type-4 domain; that stretch reads MVNLVIVSHS…LAAKQAQLGI (137 aa). The active-site Tele-phosphohistidine intermediate is the His-9. The HPr domain occupies 155–242; that stretch reads ARSVTVTIRN…SLAAEDFGEH (88 aa). Residue His-169 is the Pros-phosphohistidine intermediate of the active site. The PTS EI-like, N-terminal part stretch occupies residues 266–472; the sequence is PLPLAQPARH…IDPAAQRVSC (207 aa). His-432 functions as the Tele-phosphohistidine intermediate in the catalytic mechanism.

It belongs to the PEP-utilizing enzyme family. In terms of assembly, homodimer. The dihydroxyacetone kinase complex is composed of a homodimer of DhaM, a homodimer of DhaK and the subunit DhaL.

It carries out the reaction dihydroxyacetone + phosphoenolpyruvate = dihydroxyacetone phosphate + pyruvate. Component of the dihydroxyacetone kinase complex, which is responsible for the phosphoenolpyruvate (PEP)-dependent phosphorylation of dihydroxyacetone. DhaM serves as the phosphoryl donor. Is phosphorylated by phosphoenolpyruvate in an EI- and HPr-dependent reaction, and a phosphorelay system on histidine residues finally leads to phosphoryl transfer to DhaL and dihydroxyacetone. The polypeptide is PEP-dependent dihydroxyacetone kinase, phosphoryl donor subunit DhaM (Pantoea ananatis (strain LMG 20103)).